We begin with the raw amino-acid sequence, 204 residues long: Recombination protein RecR (204 aa).

The C4-type zinc finger occupies 59–74; sequence CTRCNTFTELEICGTC. The Toprim domain occupies 82–181; it reads TLLCVVETPA…KVSRLARGVP (100 aa).

The protein belongs to the RecR family.

May play a role in DNA repair. It seems to be involved in an RecBC-independent recombinational process of DNA repair. It may act with RecF and RecO. This is Recombination protein RecR from Cupriavidus metallidurans (strain ATCC 43123 / DSM 2839 / NBRC 102507 / CH34) (Ralstonia metallidurans).